We begin with the raw amino-acid sequence, 579 residues long: Viral transcription factor IE2 (579 aa).

Residues 1–11 (MESSAKRKMDP) are compositionally biased toward basic and acidic residues. Disordered stretches follow at residues 1-30 (MESSAKRKMDPDNPDEGPSSKVPRPETPVT) and 99-161 (DSSS…VIIK). The segment covering 99–133 (DSSSTGPTLTTHSCSVSSAPLNKPTPTSVAVTNTP) has biased composition (polar residues). Glycyl lysine isopeptide (Lys-Gly) (interchain with G-Cter in SUMO) cross-links involve residues Lys-175 and Lys-180. The SUMO-interacting motif 1/SIM1 signature appears at 199 to 202 (CIVI). Residues 200-208 (IVISDSEEE) form a non-covalent SUMO1 binding region (SIM) region. Phosphoserine occurs at positions 203 and 205. Residues 206-335 (EEEQGEEVET…SKRISELDNE (130 aa)) form a disordered region. Low complexity-rich tracts occupy residues 216-236 (RGATASSPSTGSGTPRVTSPT), 259-270 (SSSSSSCSSASD), and 301-316 (AASSSLLSCGHQSSGG). The SUMO-interacting motif 1/SIM2 motif lies at 409 to 412 (IQII). An SUMO-interacting motif 1/SIM3 motif is present at residues 500 to 503 (VDLL).

It belongs to the HHV-5 IE2 protein family. In terms of assembly, interacts with host SUMO-modified form of TATA-binding protein (TBP)-associated factor 12/TAF12 in a SIM-dependent manner; this interaction increases the transactivation activity of IE2. Interacts with host CHAF1A. Interacts with several components of the host transcriptional machinery including TBP, TF2B and CREB1. Interacts with host DNA replication licensing factor MCM3. Interacts with host PLSCR1; this interaction inhibits IE2 transactivating activity. Phosphorylated by host CK2 at Ser-203 and Ser-205; leading to enhanced SUMOylation. Post-translationally, SUMOylated; SUMOylation is enhanced when IE2 is phosphorylated by host CK2. The sumoylation is necessary for efficient replication of the virus and thus for the function of this viral transcription factor.

The protein localises to the host nucleus. In terms of biological role, stimulates viral early and late gene expression and thus play a crucial role in the regulation of productive infection. Selectively drives host RNA Pol II transcription initiation at a subset of viral early-late and late promoters without substantially affecting Pol II transcription of expressed host genes. Mechanistically, forms a repressive complex at the major immediate-early promoter region involving direct association with host nucleosomes and TBP. Concerning activation, stimulates transcription by binding nearby, but not within, core promoter regions. In addition, activates quiescent cells to reenter the cell cycle and up-regulates several E2F-responsive genes, which are responsible for pushing the cell into S phase. In S-phase, inhibits cellular DNA synthesis and blocks further cell cycle progression. The chain is Viral transcription factor IE2 (UL122) from Homo sapiens (Human).